The sequence spans 167 residues: N-alpha-acetyltransferase (167 aa).

An N-acetyltransferase domain is found at 12-167 (YRIRNARLTD…EDAYLMAAPL (156 aa)). Residue Tyr37 participates in substrate binding. Residue His88 participates in Zn(2+) binding. Residues 92 to 94 (IAV) and 100 to 105 (RLGIGT) contribute to the acetyl-CoA site. Glu127 is a binding site for Zn(2+). Acetyl-CoA-binding positions include Asn132 and 139–141 (YKK). Tyr154 provides a ligand contact to substrate.

The protein belongs to the acetyltransferase family. ARD1 subfamily. Homodimer.

Its subcellular location is the cytoplasm. The enzyme catalyses N-terminal L-alanyl-[protein] + acetyl-CoA = N-terminal N(alpha)-acetyl-L-alanyl-[protein] + CoA + H(+). The catalysed reaction is N-terminal L-seryl-[protein] + acetyl-CoA = N-terminal N(alpha)-acetyl-L-seryl-[protein] + CoA + H(+). It carries out the reaction N-terminal L-methionyl-L-leucyl-[protein] + acetyl-CoA = N-terminal N(alpha)-acetyl-L-methionyl-L-leucyl-[protein] + CoA + H(+). It catalyses the reaction N-terminal L-methionyl-L-glutamyl-[protein] + acetyl-CoA = N-terminal N(alpha)-acetyl-L-methionyl-L-glutamyl-[protein] + CoA + H(+). Displays alpha (N-terminal) acetyltransferase activity. Catalyzes the covalent attachment of an acetyl moiety from acetyl-CoA to the free alpha-amino group at the N-terminus of a protein. This chain is N-alpha-acetyltransferase, found in Sulfurisphaera tokodaii (strain DSM 16993 / JCM 10545 / NBRC 100140 / 7) (Sulfolobus tokodaii).